Reading from the N-terminus, the 57-residue chain is DNA-directed RNA polymerase subunit Rpo6 (57 aa).

This sequence belongs to the archaeal Rpo6/eukaryotic RPB6 RNA polymerase subunit family. As to quaternary structure, part of the RNA polymerase complex.

The protein localises to the cytoplasm. The enzyme catalyses RNA(n) + a ribonucleoside 5'-triphosphate = RNA(n+1) + diphosphate. In terms of biological role, DNA-dependent RNA polymerase (RNAP) catalyzes the transcription of DNA into RNA using the four ribonucleoside triphosphates as substrates. This chain is DNA-directed RNA polymerase subunit Rpo6, found in Thermococcus onnurineus (strain NA1).